The sequence spans 432 residues: Glutamyl-tRNA reductase (432 aa).

Substrate contacts are provided by residues 55-58, S114, 119-121, and Q125; these read TCNR and ETQ. C56 acts as the Nucleophile in catalysis. 194–199 contributes to the NADP(+) binding site; sequence GAGEMI.

This sequence belongs to the glutamyl-tRNA reductase family. In terms of assembly, homodimer.

It catalyses the reaction (S)-4-amino-5-oxopentanoate + tRNA(Glu) + NADP(+) = L-glutamyl-tRNA(Glu) + NADPH + H(+). Its pathway is porphyrin-containing compound metabolism; protoporphyrin-IX biosynthesis; 5-aminolevulinate from L-glutamyl-tRNA(Glu): step 1/2. Its function is as follows. Catalyzes the NADPH-dependent reduction of glutamyl-tRNA(Glu) to glutamate 1-semialdehyde (GSA). The polypeptide is Glutamyl-tRNA reductase (Burkholderia ambifaria (strain MC40-6)).